Reading from the N-terminus, the 557-residue chain is NAC domain-containing protein 17 (557 aa).

An NAC domain is found at 16 to 166; sequence SAPGFRFHPT…YYALYKLFKK (151 aa). Residues 115–172 mediate DNA binding; the sequence is VGLKKTLVFYRGRAPSGERTDWVMHEYTMDEDELGRCKNPQEYYALYKLFKKSGAGPK. A helical membrane pass occupies residues 526-546; the sequence is FLLLSIVGALCAIFWVLVATV.

Expressed in roots, rosette leaves, cauline leaves, shoot apex, stems and flowers.

The protein localises to the endoplasmic reticulum membrane. Its subcellular location is the nucleus. Functionally, transcriptional activator activated by proteolytic cleavage through regulated intramembrane proteolysis (RIP). Transcriptional activator that acts as a positive regulator of AOX1A during mitochondrial dysfunction. Binds directly to AOX1A promoter. Mediates mitochondrial retrograde signaling. The polypeptide is NAC domain-containing protein 17 (Arabidopsis thaliana (Mouse-ear cress)).